The chain runs to 397 residues: Iron-sulfur cluster assembly SufBD family protein Mb1497 (397 aa).

It belongs to the iron-sulfur cluster assembly SufBD family.

The protein is Iron-sulfur cluster assembly SufBD family protein Mb1497 of Mycobacterium bovis (strain ATCC BAA-935 / AF2122/97).